The chain runs to 698 residues: Interleukin enhancer-binding factor 3 (698 aa).

The DZF domain maps to 5–379 (RIFLNDDRHV…ALKRPMEEDG (375 aa)). 3 disordered regions span residues 51-88 (QQEK…PTRT), 374-403 (PMEE…PPQA), and 473-522 (EEKE…KHGK). Acidic residues predominate over residues 61–71 (EQPEPEEPETT). 2 stretches are compositionally biased toward basic and acidic residues: residues 72-81 (EEGKDSEGKT) and 374-384 (PMEEDGEDKSP). The Bipartite nuclear localization signal motif lies at 372–390 (KRPMEEDGEDKSPSKKKKK). The 70-residue stretch at 399 to 468 (EPPQAMNALM…AVKVLQDMGL (70 aa)) folds into the DRBM 1 domain. Polar residues predominate over residues 490-503 (TPAQPADSTQTDSA). The region spanning 520-586 (HGKNPVMELN…ALAALEKLFP (67 aa)) is the DRBM 2 domain.

A component of a ybx2/frgy2-containing mRNA-ribonucleoprotein (mRNP) complex. Also a component of the CCAAT box transcription factor (CBTF) complex. In terms of processing, phosphorylated. Phosphorylation affects nuclear translocation. Methylated by protein arginine N-methyltransferase 1 (prmt1b) in the RGG-rich domain. Methylation decreases DNA-binding and thereby decreases transcription of the gata2 gene, but does not regulate dsRNA binding or subcellular localization.

Its subcellular location is the nucleus. It is found in the cytoplasm. Its function is as follows. RNA-binding protein that plays an essential role in the biogenesis of circular RNAs (circRNAs) which are produced by back-splicing circularization of pre-mRNAs. Within the nucleus, promotes circRNAs processing by stabilizing the regulatory elements residing in the flanking introns of the circularized exons. Plays thereby a role in the back-splicing of a subset of circRNAs. As a consequence, participates in a wide range of transcriptional and post-transcriptional processes. Binds to poly-U elements and AU-rich elements (AREs) in the 3'-UTR of target mRNAs. Upon viral infection, ILF3 accumulates in the cytoplasm and participates in the innate antiviral response. Mechanistically, ILF3 becomes phosphorylated and activated by the double-stranded RNA-activated protein kinase/PKR which releases ILF3 from cellular mature circRNAs. In turn, unbound ILF3 molecules are able to interact with and thus inhibit viral mRNAs. Has a cytoplasmic role early in development as part of a ribonucleoprotein (mRNP) complex which may regulate mRNA transport and/or translation. Following nuclear localization at the mid-blastula transition, acts as a transcription factor and binds the 5'-CCAAT-3' promoter sequence to regulate transcription of the gata2 gene as a subunit of the CCAAT box transcription factor (CBTF). Its role as an mRNP component negatively regulates its activity as a transcription factor by precluding its nuclear localization. The protein is Interleukin enhancer-binding factor 3 of Xenopus tropicalis (Western clawed frog).